Here is a 987-residue protein sequence, read N- to C-terminus: ATP-dependent 6-phosphofructokinase subunit alpha (987 aa).

Positions 1-580 (MQSQDSCYGV…LYENFLSTTV (580 aa)) are N-terminal catalytic PFK domain 1. Ser-3 is subject to Phosphoserine. A Glycyl lysine isopeptide (Lys-Gly) (interchain with G-Cter in ubiquitin) cross-link involves residue Lys-89. Residues Ser-166, Ser-179, Ser-185, Ser-189, and Ser-192 each carry the phosphoserine modification. Residue Gly-215 participates in ATP binding. Ser-217 carries the post-translational modification Phosphoserine. Residues 278–279 (RS) and 308–311 (GDGS) each bind ATP. Asp-309 contacts Mg(2+). Residues 354-356 (SID), Arg-391, and 398-400 (MGR) each bind beta-D-fructose 6-phosphate. The Proton acceptor role is filled by Asp-356. Thr-450 carries the phosphothreonine modification. Residues Glu-455, Lys-482, and 488–491 (HVQR) contribute to the beta-D-fructose 6-phosphate site. Residues 581–594 (KDDGSELLPVSDRL) are interdomain linker. Positions 595-987 (NIGIVHVGAP…EVAALAAENK (393 aa)) are C-terminal regulatory PFK domain 2. Lys-625 participates in a covalent cross-link: Glycyl lysine isopeptide (Lys-Gly) (interchain with G-Cter in ubiquitin). Beta-D-fructose 2,6-bisphosphate is bound by residues Arg-665, 722-726 (TVSNN), Arg-760, 767-769 (QGG), Glu-827, Arg-853, 859-862 (HVQQ), and Arg-952.

The protein belongs to the phosphofructokinase type A (PFKA) family. ATP-dependent PFK group I subfamily. Eukaryotic two domain clade 'E' sub-subfamily. As to quaternary structure, heterooctamer of 4 alpha and 4 beta chains. The cofactor is Mg(2+).

It localises to the cytoplasm. The protein localises to the mitochondrion outer membrane. The catalysed reaction is beta-D-fructose 6-phosphate + ATP = beta-D-fructose 1,6-bisphosphate + ADP + H(+). The protein operates within carbohydrate degradation; glycolysis; D-glyceraldehyde 3-phosphate and glycerone phosphate from D-glucose: step 3/4. With respect to regulation, allosterically activated by ADP, AMP, or fructose 2,6-bisphosphate, and allosterically inhibited by ATP or citrate. Its function is as follows. Catalyzes the phosphorylation of D-fructose 6-phosphate to fructose 1,6-bisphosphate by ATP, the first committing step of glycolysis. This Saccharomyces cerevisiae (strain ATCC 204508 / S288c) (Baker's yeast) protein is ATP-dependent 6-phosphofructokinase subunit alpha (PFK1).